The chain runs to 1082 residues: CRISPR-associated endonuclease Cas9 (1082 aa).

Aspartate 16 acts as the For RuvC-like nuclease domain in catalysis. The Mg(2+) site is built by aspartate 16, glutamate 504, and glutamate 508. The region spanning 512–667 (SFKDRKEIEK…DEDGFKERNL (156 aa)) is the HNH Cas9-type domain. Histidine 588 acts as the Proton acceptor for HNH nuclease domain in catalysis. Histidine 723 contacts Mg(2+).

Belongs to the CRISPR-associated protein Cas9 family. Subtype II-C subfamily. As to quaternary structure, monomer. Binds crRNA and tracrRNA. It depends on Mg(2+) as a cofactor.

Its function is as follows. CRISPR (clustered regularly interspaced short palindromic repeat) is an adaptive immune system that provides protection against mobile genetic elements (viruses, transposable elements and conjugative plasmids). CRISPR clusters contain spacers, sequences complementary to antecedent mobile elements, and target invading nucleic acids. CRISPR clusters are transcribed and processed into CRISPR RNA (crRNA). In type II CRISPR systems correct processing of pre-crRNA requires a trans-encoded small RNA (tracrRNA), endogenous ribonuclease 3 (rnc) and this protein. The tracrRNA serves as a guide for ribonuclease 3-aided processing of pre-crRNA. Subsequently Cas9/crRNA/tracrRNA endonucleolytically cleaves linear or circular dsDNA target complementary to the spacer; Cas9 is inactive in the absence of the 2 guide RNAs (gRNA). Cas9 recognizes the protospacer adjacent motif (PAM) in the CRISPR repeat sequences to help distinguish self versus nonself, as targets within the bacterial CRISPR locus do not have PAMs. PAM recognition is also required for catalytic activity. Cuts target DNA in Cas9:gRNAs mixing experiments with C.jejuni strain NCTC 11168 and P.multocoda strain Pm70. This Neisseria meningitidis serogroup A / serotype 4A (strain DSM 15465 / Z2491) protein is CRISPR-associated endonuclease Cas9.